Reading from the N-terminus, the 253-residue chain is Glucosamine-6-phosphate deaminase (253 aa).

Residue aspartate 67 is the Proton acceptor; for enolization step of the active site. Asparagine 136 (for ring-opening step) is an active-site residue. The active-site Proton acceptor; for ring-opening step is histidine 138. Glutamate 143 (for ring-opening step) is an active-site residue.

This sequence belongs to the glucosamine/galactosamine-6-phosphate isomerase family. NagB subfamily.

The catalysed reaction is alpha-D-glucosamine 6-phosphate + H2O = beta-D-fructose 6-phosphate + NH4(+). Its pathway is amino-sugar metabolism; N-acetylneuraminate degradation; D-fructose 6-phosphate from N-acetylneuraminate: step 5/5. Catalyzes the reversible isomerization-deamination of glucosamine 6-phosphate (GlcN6P) to form fructose 6-phosphate (Fru6P) and ammonium ion. The polypeptide is Glucosamine-6-phosphate deaminase (Thermoanaerobacter sp. (strain X514)).